Here is a 130-residue protein sequence, read N- to C-terminus: Small ribosomal subunit protein uS9 (130 aa).

Over residues 99–110 the composition is skewed to basic and acidic residues; that stretch reads KKAGFLTRDPRM. The tract at residues 99–130 is disordered; it reads KKAGFLTRDPRMKERKKYGLKKARRAPQFSKR. Residues 111 to 130 show a composition bias toward basic residues; sequence KERKKYGLKKARRAPQFSKR.

This sequence belongs to the universal ribosomal protein uS9 family.

The sequence is that of Small ribosomal subunit protein uS9 from Clostridium botulinum (strain Alaska E43 / Type E3).